Consider the following 376-residue polypeptide: Phosphatidylinositol/phosphatidylcholine transfer protein SFH11 (376 aa).

Over residues 1-20 (MQETDRDIHISDGTMNKEEQ) the composition is skewed to basic and acidic residues. Residues 1–24 (MQETDRDIHISDGTMNKEEQSPNN) are disordered. The region spanning 92–266 (EYGEVKKHYP…FLGGNCTCSD (175 aa)) is the CRAL-TRIO domain. A coiled-coil region spans residues 323–357 (MEKYAALKTAVKDSQKRIEMLEISLHETKKVLNGL).

It belongs to the SFH family.

It localises to the golgi apparatus membrane. The protein resides in the cell membrane. Functionally, required for transport of secretory proteins from the Golgi complex. Catalyzes the transfer of phosphatidylinositol and phosphatidylcholine between membranes in vitro. This chain is Phosphatidylinositol/phosphatidylcholine transfer protein SFH11 (SFH11), found in Arabidopsis thaliana (Mouse-ear cress).